We begin with the raw amino-acid sequence, 262 residues long: Cytochrome c oxidase subunit 3 (262 aa).

The next 7 helical transmembrane spans lie at 13-33, 38-58, 82-102, 134-154, 159-179, 200-220, and 237-257; these read PWPLLASFAAFLSTTGGVMYM, GGGLLLAIGQLSLFYVMYVWW, GMLLFILSEIMFFFAFFWAFF, TIILLTSGASVTWAHHAILAG, GIISLAITVLLAVIFTGFQAL, ATGFHGFHVIIGTIFIAVCLF, and AAAWYWHMVDVVWLFLFVCIY.

Belongs to the cytochrome c oxidase subunit 3 family. In terms of assembly, component of the cytochrome c oxidase (complex IV, CIV), a multisubunit enzyme composed of a catalytic core of 3 subunits and several supernumerary subunits. The complex exists as a monomer or a dimer and forms supercomplexes (SCs) in the inner mitochondrial membrane with ubiquinol-cytochrome c oxidoreductase (cytochrome b-c1 complex, complex III, CIII).

It is found in the mitochondrion inner membrane. The catalysed reaction is 4 Fe(II)-[cytochrome c] + O2 + 8 H(+)(in) = 4 Fe(III)-[cytochrome c] + 2 H2O + 4 H(+)(out). In terms of biological role, component of the cytochrome c oxidase, the last enzyme in the mitochondrial electron transport chain which drives oxidative phosphorylation. The respiratory chain contains 3 multisubunit complexes succinate dehydrogenase (complex II, CII), ubiquinol-cytochrome c oxidoreductase (cytochrome b-c1 complex, complex III, CIII) and cytochrome c oxidase (complex IV, CIV), that cooperate to transfer electrons derived from NADH and succinate to molecular oxygen, creating an electrochemical gradient over the inner membrane that drives transmembrane transport and the ATP synthase. Cytochrome c oxidase is the component of the respiratory chain that catalyzes the reduction of oxygen to water. Electrons originating from reduced cytochrome c in the intermembrane space (IMS) are transferred via the dinuclear copper A center (CU(A)) of subunit 2 and heme A of subunit 1 to the active site in subunit 1, a binuclear center (BNC) formed by heme A3 and copper B (CU(B)). The BNC reduces molecular oxygen to 2 water molecules using 4 electrons from cytochrome c in the IMS and 4 protons from the mitochondrial matrix. The polypeptide is Cytochrome c oxidase subunit 3 (COX3) (Prototheca wickerhamii).